The primary structure comprises 238 residues: Orotidine 5'-phosphate decarboxylase (238 aa).

Substrate-binding positions include Asp10, Lys32, 59–68 (DLKLHDIPNT), Thr122, Arg184, Gln193, Gly213, and Arg214. The active-site Proton donor is Lys61.

The protein belongs to the OMP decarboxylase family. Type 1 subfamily. As to quaternary structure, homodimer.

It carries out the reaction orotidine 5'-phosphate + H(+) = UMP + CO2. Its pathway is pyrimidine metabolism; UMP biosynthesis via de novo pathway; UMP from orotate: step 2/2. Catalyzes the decarboxylation of orotidine 5'-monophosphate (OMP) to uridine 5'-monophosphate (UMP). In Bacillus cereus (strain ZK / E33L), this protein is Orotidine 5'-phosphate decarboxylase.